The following is a 609-amino-acid chain: Elongation factor 4 (609 aa).

Residues 5 to 187 (SKIRNFSIIA…AIVAKIPPPE (183 aa)) enclose the tr-type G domain. GTP is bound by residues 17–22 (DHGKST) and 134–137 (NKID).

Belongs to the TRAFAC class translation factor GTPase superfamily. Classic translation factor GTPase family. LepA subfamily.

It localises to the cell inner membrane. It carries out the reaction GTP + H2O = GDP + phosphate + H(+). In terms of biological role, required for accurate and efficient protein synthesis under certain stress conditions. May act as a fidelity factor of the translation reaction, by catalyzing a one-codon backward translocation of tRNAs on improperly translocated ribosomes. Back-translocation proceeds from a post-translocation (POST) complex to a pre-translocation (PRE) complex, thus giving elongation factor G a second chance to translocate the tRNAs correctly. Binds to ribosomes in a GTP-dependent manner. The chain is Elongation factor 4 from Erythrobacter litoralis (strain HTCC2594).